Consider the following 206-residue polypeptide: Large ribosomal subunit protein uL4 (206 aa).

A disordered region spans residues K49–A79.

Belongs to the universal ribosomal protein uL4 family. Part of the 50S ribosomal subunit.

One of the primary rRNA binding proteins, this protein initially binds near the 5'-end of the 23S rRNA. It is important during the early stages of 50S assembly. It makes multiple contacts with different domains of the 23S rRNA in the assembled 50S subunit and ribosome. Its function is as follows. Forms part of the polypeptide exit tunnel. This chain is Large ribosomal subunit protein uL4, found in Methylobacterium sp. (strain 4-46).